We begin with the raw amino-acid sequence, 117 residues long: MATYSLANERLRALEDIEREIGAILQNAGTVILELSKEKTNERLLDRQAAAFTASVQHVEAELSAQIRYLTQVATGQPHEGSSYSSRKDCQMALKRLDYARLKLSEVARTCEQMLEN.

A2 carries the N-acetylalanine modification.

This sequence belongs to the Mediator complex subunit 11 family. Component of the Mediator complex, which is composed of MED1, MED4, MED6, MED7, MED8, MED9, MED10, MED11, MED12, MED13, MED13L, MED14, MED15, MED16, MED17, MED18, MED19, MED20, MED21, MED22, MED23, MED24, MED25, MED26, MED27, MED29, MED30, MED31, CCNC, CDK8 and CDC2L6/CDK11. The MED12, MED13, CCNC and CDK8 subunits form a distinct module termed the CDK8 module. Mediator containing the CDK8 module is less active than Mediator lacking this module in supporting transcriptional activation. Individual preparations of the Mediator complex lacking one or more distinct subunits have been variously termed ARC, CRSP, DRIP, PC2, SMCC and TRAP.

It is found in the nucleus. Its function is as follows. Component of the Mediator complex, a coactivator involved in the regulated transcription of nearly all RNA polymerase II-dependent genes. Mediator functions as a bridge to convey information from gene-specific regulatory proteins to the basal RNA polymerase II transcription machinery. Mediator is recruited to promoters by direct interactions with regulatory proteins and serves as a scaffold for the assembly of a functional pre-initiation complex with RNA polymerase II and the general transcription factors. The polypeptide is Mediator of RNA polymerase II transcription subunit 11 (MED11) (Bos taurus (Bovine)).